The following is a 1057-amino-acid chain: Probable sucrose-phosphate synthase 1 (1057 aa).

Residues 103–115 (RRLERERGRREAT) show a composition bias toward basic and acidic residues. 3 disordered regions span residues 103–143 (RRLE…STRS), 439–459 (PQDG…ASPD), and 670–693 (RHPQ…GDSL). Residues 442 to 452 (GDMDGETEGNE) show a composition bias toward acidic residues.

The protein belongs to the glycosyltransferase 1 family. In terms of assembly, homodimer or homotetramer.

The catalysed reaction is beta-D-fructose 6-phosphate + UDP-alpha-D-glucose = sucrose 6(F)-phosphate + UDP + H(+). It participates in glycan biosynthesis; sucrose biosynthesis; sucrose from D-fructose 6-phosphate and UDP-alpha-D-glucose: step 1/2. Activity is regulated by phosphorylation and moderated by concentration of metabolites and light. Functionally, plays a role in photosynthetic sucrose synthesis by catalyzing the rate-limiting step of sucrose biosynthesis from UDP-glucose and fructose- 6-phosphate. Involved in the regulation of carbon partitioning in the leaves of plants. May regulate the synthesis of sucrose and therefore play a major role as a limiting factor in the export of photoassimilates out of the leaf. Plays a role for sucrose availability that is essential for plant growth and fiber elongation. The sequence is that of Probable sucrose-phosphate synthase 1 (SPS1) from Citrus unshiu (Satsuma mandarin).